A 185-amino-acid chain; its full sequence is MLQKTGRGLLAFLLIVLEWTQPSLPSPLRPICDLRVLNHFIKEAQDAEAAMKLCSEGCTLSDSVIVPQTTVEFDVWEKKSALAKAQEVQSGLWLLQEAFNFLRTSVTNTALHSHIDNSVRNLLSVNAVLRSLNIQEFTPPASAAEIEGTWRVSTATELLQVHINFLRGKVRLILLDAQACQQDVS.

Positions 1–25 (MLQKTGRGLLAFLLIVLEWTQPSLP) are cleaved as a signal peptide. Cystine bridges form between cysteine 32-cysteine 180 and cysteine 54-cysteine 58.

The protein belongs to the EPO/TPO family. Expressed mainly in heart, liver and brain. Isoform 2 is brain specific.

The protein localises to the secreted. Its function is as follows. Erythropoietin is the principal hormone involved in the regulation of erythrocyte differentiation and the maintenance of a physiological level of circulating erythrocyte mass. The protein is Erythropoietin (epo) of Takifugu rubripes (Japanese pufferfish).